The sequence spans 76 residues: VpAmp1.0 (76 aa).

The first 22 residues, 1-22 (MKLINLVPVFFVLIIVVDYCHS), serve as a signal peptide directing secretion. I41 is modified (isoleucine amide). A propeptide spanning residues 42–76 (GKRSVESQRYVDLNRRDLEQDLQELQDFLDQISEH) is cleaved from the precursor.

This sequence belongs to the non-disulfide-bridged peptide (NDBP) superfamily. Short antimicrobial peptide (group 4) family. In terms of tissue distribution, expressed by the venom gland.

Its subcellular location is the secreted. The protein resides in the target cell membrane. Its function is as follows. Antimicrobial peptide with potent activity against Gram-positive bacteria S.aureus (MIC=2.5 uM) and S.agalactiaea (MIC=2.5 uM), and Gram-negative bacteria E.coli (MIC=24 uM) and P.aeruginosa (MIC=2.5 uM), as well as against yeasts Candida albicans (MIC=6.25 uM) and C.glabrata (MIC&gt;50 uM). Also elicits high hemolysis on human erythrocytes (HC(50)=9.2 uM). This chain is VpAmp1.0, found in Mesomexovis punctatus (Scorpion).